The sequence spans 441 residues: Amino-acid acetyltransferase (441 aa).

Residues 295-434 (EQVRRATIND…QALYNYQRRS (140 aa)) enclose the N-acetyltransferase domain.

Belongs to the acetyltransferase family. ArgA subfamily. As to quaternary structure, homohexamer.

The protein resides in the cytoplasm. The catalysed reaction is L-glutamate + acetyl-CoA = N-acetyl-L-glutamate + CoA + H(+). Its pathway is amino-acid biosynthesis; L-arginine biosynthesis; N(2)-acetyl-L-ornithine from L-glutamate: step 1/4. The protein is Amino-acid acetyltransferase of Pectobacterium carotovorum subsp. carotovorum (strain PC1).